Reading from the N-terminus, the 379-residue chain is Na(+)/H(+) antiporter NhaA (379 aa).

A run of 12 helical transmembrane segments spans residues 14–34 (AGGI…NTPL), 59–79 (LLMW…GMEV), 95–115 (VFPA…FLVF), 125–145 (GWAI…ALLG), 154–174 (IFLL…IALF), 175–195 (FSHD…AILI), 200–220 (LKIT…ASVL), 221–241 (KSGV…PLNG), 261–281 (FAIL…GMGM), 292–312 (IALG…FVAV), 328–348 (IFAV…LAGL), and 359–379 (VTAL…VLGY).

It belongs to the NhaA Na(+)/H(+) (TC 2.A.33) antiporter family.

It localises to the cell inner membrane. It carries out the reaction Na(+)(in) + 2 H(+)(out) = Na(+)(out) + 2 H(+)(in). Functionally, na(+)/H(+) antiporter that extrudes sodium in exchange for external protons. This chain is Na(+)/H(+) antiporter NhaA, found in Pasteurella multocida (strain Pm70).